The primary structure comprises 70 residues: Large ribosomal subunit protein bL31 (70 aa).

Zn(2+) is bound by residues cysteine 16, cysteine 18, cysteine 37, and cysteine 40.

It belongs to the bacterial ribosomal protein bL31 family. Type A subfamily. Part of the 50S ribosomal subunit. Zn(2+) is required as a cofactor.

Binds the 23S rRNA. The chain is Large ribosomal subunit protein bL31 from Shewanella halifaxensis (strain HAW-EB4).